Consider the following 491-residue polypeptide: Rab5 GDP/GTP exchange factor (491 aa).

Positions 1-74 are interaction with ubiquitinated proteins; it reads MSLKSERRGI…EEEAFASSQS (74 aa). The A20-type zinc-finger motif lies at 13-47; the sequence is DQSDLLCKKGCGYYGNPAWQGFCSKCWREEYHKAR. Cysteine 19, cysteine 23, cysteine 35, and cysteine 38 together coordinate Zn(2+). A disordered region spans residues 66–85; that stretch reads EEAFASSQSSQGAQSLTFSK. Over residues 69–84 the composition is skewed to low complexity; the sequence is FASSQSSQGAQSLTFS. 2 positions are modified to phosphoserine: serine 124 and serine 132. N6-acetyllysine is present on residues lysine 151 and lysine 170. The 144-residue stretch at 232–375 folds into the VPS9 domain; sequence EKKDLAIQKR…IEKLDAQSLN (144 aa). Serine 373, serine 377, serine 390, and serine 400 each carry phosphoserine. Positions 462-491 are disordered; that stretch reads PPNQPLAAIDSENVENDKLPPPLQPQVYAG.

As to quaternary structure, interacts with RGS14; the interaction is GTP-dependent. Heterodimer with RABEP1. The heterodimer binds RAB4A and RAB5A that have been activated by GTP-binding. Interacts with RAB21, and with 100-fold lower affinity also with RAB22. Binds TSC2, GGA1, GGA2, GGA3, AP1G1 and AP1G2. Interacts with ubiquitinated EGFR. In terms of processing, monoubiquitinated.

Its subcellular location is the cytoplasm. It is found in the early endosome. The protein localises to the recycling endosome. Its function is as follows. Rab effector protein acting as linker between gamma-adaptin, RAB4A or RAB5A. Involved in endocytic membrane fusion and membrane trafficking of recycling endosomes. Stimulates nucleotide exchange on RAB5A. Can act as a ubiquitin ligase. The sequence is that of Rab5 GDP/GTP exchange factor (RABGEF1) from Homo sapiens (Human).